Here is a 166-residue protein sequence, read N- to C-terminus: Protein phosphatase 1 regulatory subunit 1A (166 aa).

Methionine 1 carries the post-translational modification N-acetylmethionine. Positions 1 to 166 (MEQDNSPRKI…SQDSQGASAV (166 aa)) are disordered. An essential for activity region spans residues 9-12 (KIQF). Residues 19-29 (PHLDPEAAEQI) are compositionally biased toward basic and acidic residues. At threonine 35 the chain carries Phosphothreonine; by PKA. The essential for activity stretch occupies residues 42-54 (TSDQSSPEVDEDR). 4 positions are modified to phosphoserine: serine 43, serine 46, serine 47, and serine 67. Residues 104-114 (AAEGTGAQESQ) are compositionally biased toward low complexity. Over residues 143–152 (AQERRGEEPS) the composition is skewed to basic and acidic residues. The interaction with PPP1R15A stretch occupies residues 143 to 166 (AQERRGEEPSTAKTSQDSQGASAV). A compositionally biased stretch (polar residues) spans 153 to 166 (TAKTSQDSQGASAV).

Belongs to the protein phosphatase inhibitor 1 family. In terms of assembly, interacts with PPP1R15A. Phosphorylation of Thr-35 is required for activity.

Functionally, inhibitor of protein-phosphatase 1. This protein may be important in hormonal control of glycogen metabolism. Hormones that elevate intracellular cAMP increase I-1 activity in many tissues. I-1 activation may impose cAMP control over proteins that are not directly phosphorylated by PKA. Following a rise in intracellular calcium, I-1 is inactivated by calcineurin (or PP2B). Does not inhibit type-2 phosphatases. The protein is Protein phosphatase 1 regulatory subunit 1A (PPP1R1A) of Oryctolagus cuniculus (Rabbit).